A 208-amino-acid polypeptide reads, in one-letter code: Small ribosomal subunit protein uS4 (208 aa).

One can recognise an S4 RNA-binding domain in the interval 98–161 (TRLDNTVYRL…RKIPVIAEAQ (64 aa)).

Belongs to the universal ribosomal protein uS4 family. In terms of assembly, part of the 30S ribosomal subunit. Contacts protein S5. The interaction surface between S4 and S5 is involved in control of translational fidelity.

Its function is as follows. One of the primary rRNA binding proteins, it binds directly to 16S rRNA where it nucleates assembly of the body of the 30S subunit. In terms of biological role, with S5 and S12 plays an important role in translational accuracy. This Maridesulfovibrio salexigens (strain ATCC 14822 / DSM 2638 / NCIMB 8403 / VKM B-1763) (Desulfovibrio salexigens) protein is Small ribosomal subunit protein uS4.